A 439-amino-acid polypeptide reads, in one-letter code: uncharacterized protein (439 aa).

The first 22 residues, 1–22 (MWVALKRFGFLSGLLALTVLSA), serve as a signal peptide directing secretion. C23 carries N-palmitoyl cysteine lipidation. A lipid anchor (S-diacylglycerol cysteine) is attached at C23.

This sequence belongs to the MG067/MG068/MG395 family.

The protein localises to the cell membrane. This is an uncharacterized protein from Mycoplasma pneumoniae (strain ATCC 29342 / M129 / Subtype 1) (Mycoplasmoides pneumoniae).